The chain runs to 260 residues: Phosphate import ATP-binding protein PstB 5 (260 aa).

In terms of domain architecture, ABC transporter spans 9-255 (IKVKDLSFYY…PLDSRTRDYV (247 aa)). 41–48 (GPSGCGKS) is an ATP binding site.

Belongs to the ABC transporter superfamily. Phosphate importer (TC 3.A.1.7) family. In terms of assembly, the complex is composed of two ATP-binding proteins (PstB), two transmembrane proteins (PstC and PstA) and a solute-binding protein (PstS).

Its subcellular location is the cell inner membrane. It carries out the reaction phosphate(out) + ATP + H2O = ADP + 2 phosphate(in) + H(+). Its function is as follows. Part of the ABC transporter complex PstSACB involved in phosphate import. Responsible for energy coupling to the transport system. The chain is Phosphate import ATP-binding protein PstB 5 from Trichormus variabilis (strain ATCC 29413 / PCC 7937) (Anabaena variabilis).